The primary structure comprises 230 residues: Ribonuclease HII (230 aa).

The RNase H type-2 domain maps to 28–217 (FRIAGIDEAG…VKEHLPSQPD (190 aa)). The a divalent metal cation site is built by Asp-34, Glu-35, and Asp-126. Residues 209–230 (KEHLPSQPDSDTAGPSTGLFSF) are disordered. Residues 215–230 (QPDSDTAGPSTGLFSF) show a composition bias toward polar residues.

Belongs to the RNase HII family. Mn(2+) serves as cofactor. Mg(2+) is required as a cofactor.

The protein resides in the cytoplasm. The catalysed reaction is Endonucleolytic cleavage to 5'-phosphomonoester.. Its function is as follows. Endonuclease that specifically degrades the RNA of RNA-DNA hybrids. This chain is Ribonuclease HII, found in Citrifermentans bemidjiense (strain ATCC BAA-1014 / DSM 16622 / JCM 12645 / Bem) (Geobacter bemidjiensis).